The chain runs to 469 residues: tRNA(Ile)-lysidine synthase (469 aa).

26–31 (SGGPDS) is a binding site for ATP.

It belongs to the tRNA(Ile)-lysidine synthase family.

It localises to the cytoplasm. The enzyme catalyses cytidine(34) in tRNA(Ile2) + L-lysine + ATP = lysidine(34) in tRNA(Ile2) + AMP + diphosphate + H(+). Its function is as follows. Ligates lysine onto the cytidine present at position 34 of the AUA codon-specific tRNA(Ile) that contains the anticodon CAU, in an ATP-dependent manner. Cytidine is converted to lysidine, thus changing the amino acid specificity of the tRNA from methionine to isoleucine. The protein is tRNA(Ile)-lysidine synthase of Clostridium perfringens (strain ATCC 13124 / DSM 756 / JCM 1290 / NCIMB 6125 / NCTC 8237 / Type A).